Consider the following 519-residue polypeptide: Putative cysteine ligase BshC (519 aa).

Coiled coils occupy residues 51–71 and 440–464; these read LNAL…SLKE and TKLN…HEQA.

The protein belongs to the BshC family.

Its function is as follows. Involved in bacillithiol (BSH) biosynthesis. May catalyze the last step of the pathway, the addition of cysteine to glucosamine malate (GlcN-Mal) to generate BSH. The sequence is that of Putative cysteine ligase BshC from Exiguobacterium sibiricum (strain DSM 17290 / CCUG 55495 / CIP 109462 / JCM 13490 / 255-15).